A 172-amino-acid chain; its full sequence is Glutamyl-tRNA(Gln) amidotransferase subunit C-3, mitochondrial (172 aa).

The disordered stretch occupies residues 49-71 (KHPSKVPQRPNKSTIDGQSTPTR). Residues 58-71 (PNKSTIDGQSTPTR) are compositionally biased toward polar residues.

The protein belongs to the GatC family. In terms of assembly, subunit of the heterotrimeric GatCAB amidotransferase (AdT) complex, composed of A, B and C subunits.

Its subcellular location is the mitochondrion. It carries out the reaction L-glutamyl-tRNA(Gln) + L-glutamine + ATP + H2O = L-glutaminyl-tRNA(Gln) + L-glutamate + ADP + phosphate + H(+). In terms of biological role, allows the formation of correctly charged Gln-tRNA(Gln) through the transamidation of misacylated Glu-tRNA(Gln) in the mitochondria. The reaction takes place in the presence of glutamine and ATP through an activated gamma-phospho-Glu-tRNA(Gln). The chain is Glutamyl-tRNA(Gln) amidotransferase subunit C-3, mitochondrial from Culex quinquefasciatus (Southern house mosquito).